The sequence spans 98 residues: NADH-ubiquinone oxidoreductase chain 4L (98 aa).

The next 3 membrane-spanning stretches (helical) occupy residues 1–21 (MSIV…GTLL), 29–49 (SLMC…LISL), and 59–79 (VPLI…ALLV).

This sequence belongs to the complex I subunit 4L family. In terms of assembly, core subunit of respiratory chain NADH dehydrogenase (Complex I) which is composed of 45 different subunits.

Its subcellular location is the mitochondrion inner membrane. It carries out the reaction a ubiquinone + NADH + 5 H(+)(in) = a ubiquinol + NAD(+) + 4 H(+)(out). In terms of biological role, core subunit of the mitochondrial membrane respiratory chain NADH dehydrogenase (Complex I) which catalyzes electron transfer from NADH through the respiratory chain, using ubiquinone as an electron acceptor. Part of the enzyme membrane arm which is embedded in the lipid bilayer and involved in proton translocation. This is NADH-ubiquinone oxidoreductase chain 4L (MT-ND4L) from Hemiechinus auritus (Long-eared hedgehog).